Reading from the N-terminus, the 243-residue chain is Venom peptide isomerase heavy chain (243 aa).

The Peptidase S1 domain occupies 1–243 (IVGGKTAKFG…YTNWMSKNMV (243 aa)). Cys31 and Cys47 are disulfide-bonded. Catalysis depends on charge relay system residues His46 and Asp96. N-linked (GlcNAc...) asparagine glycosylation is present at Asn127. 2 cysteine pairs are disulfide-bonded: Cys159–Cys181 and Cys190–Cys219. The active-site Charge relay system is Ser194.

The protein belongs to the peptidase S1 family. Heterodimer with venom peptide isomerase light chain; disulfide-linked. In terms of processing, N-linked glycan at Asn-127 consists of Man3-GlcNAc2-Fuc. As to expression, expressed by the venom gland.

It is found in the secreted. Its function is as follows. Peptide isomerase that inverts the chirality at the Ser-81 of omega-Aga IVB. Acts cofactor-independently. This Agelenopsis aperta (North American funnel-web spider) protein is Venom peptide isomerase heavy chain.